A 164-amino-acid polypeptide reads, in one-letter code: Ribosome maturation factor RimP (164 aa).

Belongs to the RimP family.

The protein resides in the cytoplasm. Its function is as follows. Required for maturation of 30S ribosomal subunits. The protein is Ribosome maturation factor RimP of Cellvibrio japonicus (strain Ueda107) (Pseudomonas fluorescens subsp. cellulosa).